Here is a 165-residue protein sequence, read N- to C-terminus: Regulator of ribonuclease activity A (165 aa).

The protein belongs to the RraA family. As to quaternary structure, homotrimer. Binds to both RNA-binding sites in the C-terminal region of Rne and to RhlB.

It is found in the cytoplasm. Globally modulates RNA abundance by binding to RNase E (Rne) and regulating its endonucleolytic activity. Can modulate Rne action in a substrate-dependent manner by altering the composition of the degradosome. Modulates RNA-binding and helicase activities of the degradosome. This Pseudoalteromonas translucida (strain TAC 125) protein is Regulator of ribonuclease activity A.